A 355-amino-acid polypeptide reads, in one-letter code: Epoxyqueuosine reductase (355 aa).

Asp143 serves as the catalytic Proton donor. Residues 185–217 (LPLPIDTPATAHCGTCTRCIDICPTQAIIAPHR) enclose the 4Fe-4S ferredoxin-type domain. Positions 197, 200, 203, 207, 223, 250, 253, and 257 each coordinate [4Fe-4S] cluster.

This sequence belongs to the QueG family. Monomer. It depends on cob(II)alamin as a cofactor. [4Fe-4S] cluster serves as cofactor.

The protein resides in the cytoplasm. The enzyme catalyses epoxyqueuosine(34) in tRNA + AH2 = queuosine(34) in tRNA + A + H2O. The protein operates within tRNA modification; tRNA-queuosine biosynthesis. Catalyzes the conversion of epoxyqueuosine (oQ) to queuosine (Q), which is a hypermodified base found in the wobble positions of tRNA(Asp), tRNA(Asn), tRNA(His) and tRNA(Tyr). This is Epoxyqueuosine reductase from Xanthomonas campestris pv. campestris (strain ATCC 33913 / DSM 3586 / NCPPB 528 / LMG 568 / P 25).